The primary structure comprises 386 residues: MRIYLVAGELSGDILGAGLMQALKRRHPDAEFRGIGGPRMLAEGMQSLYPLETLSVMGLVEVLKHLPGLIKVRRHLRRDALAWQPDVMIGIDAPDFNLGLERQLRATGMRTVHYVSPSVWAWRQGRVKTIARSVDAMLTFLPFEAAFYARHQVPVAFVGHPLADELPLVNDRQAARTALGLSSTAPLLAVLPGSRGNEIRFLGPTFLDSAVWLRERVPGLQVVIPAASPARRQELEVLLATHPAREFVHLRDGESRQAMTAADAVLLASGTAALEAMLCHRPMVVAYKMAAATHWLAKRMVKTEWISLPNLIAQETLVPELVQEDASCEAIGEALLTWLGDETHRQATETRFAALHATLQRGASERAAEAIDSLVVHGRLPEEPTA.

This sequence belongs to the LpxB family.

The catalysed reaction is a lipid X + a UDP-2-N,3-O-bis[(3R)-3-hydroxyacyl]-alpha-D-glucosamine = a lipid A disaccharide + UDP + H(+). It functions in the pathway bacterial outer membrane biogenesis; LPS lipid A biosynthesis. In terms of biological role, condensation of UDP-2,3-diacylglucosamine and 2,3-diacylglucosamine-1-phosphate to form lipid A disaccharide, a precursor of lipid A, a phosphorylated glycolipid that anchors the lipopolysaccharide to the outer membrane of the cell. In Chromohalobacter salexigens (strain ATCC BAA-138 / DSM 3043 / CIP 106854 / NCIMB 13768 / 1H11), this protein is Lipid-A-disaccharide synthase.